Reading from the N-terminus, the 137-residue chain is Probable calcium-binding protein CML33 (137 aa).

EF-hand domains follow at residues 1–36, 37–72, 76–111, and 112–137; these read MNNM…LSPS, IPSE…TAQS, DVEK…LGEK, and CTVE…FVGV. Ca(2+)-binding residues include Asp-14, Ser-16, Asp-18, Lys-20, and Glu-25. The Ca(2+) site is built by Asp-89, Asn-91, Asp-93, Lys-95, and Glu-100.

Potential calcium sensor. This Arabidopsis thaliana (Mouse-ear cress) protein is Probable calcium-binding protein CML33 (CML33).